A 306-amino-acid polypeptide reads, in one-letter code: Pantothenate kinase (306 aa).

91-98 (GSVAVGKS) lines the ATP pocket.

The protein belongs to the prokaryotic pantothenate kinase family.

It is found in the cytoplasm. It catalyses the reaction (R)-pantothenate + ATP = (R)-4'-phosphopantothenate + ADP + H(+). Its pathway is cofactor biosynthesis; coenzyme A biosynthesis; CoA from (R)-pantothenate: step 1/5. This is Pantothenate kinase (coaA) from Streptococcus pyogenes serotype M18 (strain MGAS8232).